The chain runs to 201 residues: MALHDENVVWHSHPVTVAAREQLHGHRGVMLWFTGLSGSGKSTVAGALEEALHQRGVSTYLLDGDNVRHGLCRDLGFSDADRQENIRRVGEVASLMADAGLIVLTAFISPHRAERQLVKERVGHDRFIEIYVNTPLAICEQRDPKGLYKKARAGELRNFTGIDAIYEAPDSPQVHLNGEQLVTNLVSQLLDLLRRRDIIRS.

35–42 (GLSGSGKS) contributes to the ATP binding site. The active-site Phosphoserine intermediate is the serine 109.

The protein belongs to the APS kinase family.

It carries out the reaction adenosine 5'-phosphosulfate + ATP = 3'-phosphoadenylyl sulfate + ADP + H(+). The protein operates within sulfur metabolism; hydrogen sulfide biosynthesis; sulfite from sulfate: step 2/3. Its function is as follows. Catalyzes the synthesis of activated sulfate. This Salmonella paratyphi A (strain AKU_12601) protein is Adenylyl-sulfate kinase.